Here is a 362-residue protein sequence, read N- to C-terminus: Alanine racemase (362 aa).

Catalysis depends on lysine 33, which acts as the Proton acceptor; specific for D-alanine. Lysine 33 bears the N6-(pyridoxal phosphate)lysine mark. Position 129 (arginine 129) interacts with substrate. Residue tyrosine 254 is the Proton acceptor; specific for L-alanine of the active site. Residue methionine 302 coordinates substrate.

Belongs to the alanine racemase family. The cofactor is pyridoxal 5'-phosphate.

The catalysed reaction is L-alanine = D-alanine. Its pathway is amino-acid biosynthesis; D-alanine biosynthesis; D-alanine from L-alanine: step 1/1. In terms of biological role, catalyzes the interconversion of L-alanine and D-alanine. May also act on other amino acids. The chain is Alanine racemase (alr) from Xylella fastidiosa (strain 9a5c).